Consider the following 611-residue polypeptide: Angiotensin-converting enzyme (611 aa).

Residues Met1 to Gly17 form the signal peptide. Positions Thr19 to Lys607 constitute a Peptidase M2 domain. Asn53 carries N-linked (GlcNAc...) asparagine glycosylation. A disulfide bridge connects residues Cys133 and Cys141. Asn196 is a glycosylation site (N-linked (GlcNAc...) asparagine). Cys336 and Cys354 are joined by a disulfide. His367 provides a ligand contact to Zn(2+). The Proton acceptor role is filled by Glu368. Residues His371 and Glu395 each coordinate Zn(2+). Catalysis depends on His497, which acts as the Proton donor. A disulfide bridge links Cys522 with Cys540. Residue Asn531 is glycosylated (N-linked (GlcNAc...) asparagine).

This sequence belongs to the peptidase M2 family. It depends on Zn(2+) as a cofactor. In terms of tissue distribution, expressed in the compound ganglion and in the posterior region of the midgut.

The protein localises to the secreted. Its subcellular location is the extracellular space. It catalyses the reaction Release of a C-terminal dipeptide, oligopeptide-|-Xaa-Yaa, when Xaa is not Pro, and Yaa is neither Asp nor Glu. Thus, conversion of angiotensin I to angiotensin II, with increase in vasoconstrictor activity, but no action on angiotensin II.. Functionally, involved in the specific maturation or degradation of a number of bioactive peptides. The polypeptide is Angiotensin-converting enzyme (ACE) (Haematobia irritans exigua (Buffalo fly)).